The primary structure comprises 505 residues: UDP-N-acetylglucosamine diphosphorylase 1 (505 aa).

A compositionally biased stretch (basic and acidic residues) spans 1-10; sequence MIEPSMEREN. Residues 1 to 32 are disordered; sequence MIEPSMERENGALTAATTTTTAVTSPPPMASS. The span at 14–24 shows a compositional bias: low complexity; that stretch reads TAATTTTTAVT. The Substrate binding signature appears at 134-137; the sequence is LSGG. Position 253 (Asn253) interacts with substrate. Residues 335 to 336 carry the Substrate binding motif; that stretch reads EY. Substrate is bound at residue Lys432.

Belongs to the UDPGP type 1 family. In terms of assembly, monomer. Mg(2+) is required as a cofactor. Mn(2+) serves as cofactor. Expressed in root tips, stipules and mature pollen grains.

It catalyses the reaction N-acetyl-alpha-D-glucosamine 1-phosphate + UTP + H(+) = UDP-N-acetyl-alpha-D-glucosamine + diphosphate. It carries out the reaction N-acetyl-alpha-D-galactosamine 1-phosphate + UTP + H(+) = UDP-N-acetyl-alpha-D-galactosamine + diphosphate. The protein operates within nucleotide-sugar biosynthesis; UDP-N-acetyl-alpha-D-glucosamine biosynthesis; UDP-N-acetyl-alpha-D-glucosamine from N-acetyl-alpha-D-glucosamine 1-phosphate: step 1/1. Inhibited by hygromycin and streptomycin, but not by gentamycin or kanamycin. Functionally, uridylyltransferase involved in the biosynthesis of UDP-glucosamine, an essential precursor for glycoprotein and glycolipid synthesis. Can use both UDP-glucosamine and the 4-epimer UDP-galactosamine as substrates, but no other sugars or NTPs. Acts redundantly with GLCNAC1PUT2. Required for gametogenesis and embryo development. In Arabidopsis thaliana (Mouse-ear cress), this protein is UDP-N-acetylglucosamine diphosphorylase 1 (GLCNAC1PUT1).